Consider the following 148-residue polypeptide: MPKALIVYGSTTGNTEYTAETIARELADAGYEVDSRDAASVEAGGLFEGFDLVLLGCSTWGDDSIELQDDFIPLFDSLEETGAQGRKVACFGCGDSSYEYFCGAVDAIEEKLKNLGAEIVQDGLRIDGDPRAARDDIVGWAHDVRGAI.

The region spanning 4–145 is the Flavodoxin-like domain; the sequence is ALIVYGSTTG…DIVGWAHDVR (142 aa).

Belongs to the flavodoxin family. It depends on FMN as a cofactor.

In terms of biological role, low-potential electron donor to a number of redox enzymes. The protein is Flavodoxin of Nitratidesulfovibrio vulgaris (strain ATCC 29579 / DSM 644 / CCUG 34227 / NCIMB 8303 / VKM B-1760 / Hildenborough) (Desulfovibrio vulgaris).